Reading from the N-terminus, the 90-residue chain is Small ribosomal subunit protein bS20 (90 aa).

The segment at 1–25 (MANSAQARKRARQAAKANSHNSALR) is disordered.

The protein belongs to the bacterial ribosomal protein bS20 family.

In terms of biological role, binds directly to 16S ribosomal RNA. The protein is Small ribosomal subunit protein bS20 of Burkholderia orbicola (strain MC0-3).